The primary structure comprises 115 residues: Large ribosomal subunit protein bL19 (115 aa).

It belongs to the bacterial ribosomal protein bL19 family.

This protein is located at the 30S-50S ribosomal subunit interface and may play a role in the structure and function of the aminoacyl-tRNA binding site. The sequence is that of Large ribosomal subunit protein bL19 from Fervidobacterium nodosum (strain ATCC 35602 / DSM 5306 / Rt17-B1).